The chain runs to 276 residues: UPF0328 protein ECU01_0090/ECU01_1520/ECU02_1550/ECU08_0020 (276 aa).

A disordered region spans residues 1-24 (MGIIDVQRSHLTATPSKERDAPAH).

It belongs to the UPF0328 family.

The chain is UPF0328 protein ECU01_0090/ECU01_1520/ECU02_1550/ECU08_0020 from Encephalitozoon cuniculi (strain GB-M1) (Microsporidian parasite).